The chain runs to 269 residues: 3'(2'),5'-bisphosphate nucleotidase CysQ (269 aa).

The Mg(2+) site is built by Glu69, Asp89, Leu91, Asp92, and Asp216. Glu69 lines the substrate pocket. Residues 91-94 and Asp216 each bind substrate; that span reads LDGT.

Belongs to the inositol monophosphatase superfamily. CysQ family. Mg(2+) is required as a cofactor.

It is found in the cell inner membrane. It carries out the reaction adenosine 3',5'-bisphosphate + H2O = AMP + phosphate. Its function is as follows. Converts adenosine-3',5'-bisphosphate (PAP) to AMP. This is 3'(2'),5'-bisphosphate nucleotidase CysQ from Haemophilus influenzae (strain ATCC 51907 / DSM 11121 / KW20 / Rd).